The primary structure comprises 657 residues: MFLSHPPQVIQPTYHTVNFLPRSPLKPPSCSVALNNPSISSGAGAKISNNQLIQSLCKEGKLKQAIRVLSQESSPSQQTYELLILCCGHRSSLSDALRVHRHILDNGSDQDPFLATKLIGMYSDLGSVDYARKVFDKTRKRTIYVWNALFRALTLAGHGEEVLGLYWKMNRIGVESDRFTYTYVLKACVASECTVNHLMKGKEIHAHLTRRGYSSHVYIMTTLVDMYARFGCVDYASYVFGGMPVRNVVSWSAMIACYAKNGKAFEALRTFREMMRETKDSSPNSVTMVSVLQACASLAALEQGKLIHGYILRRGLDSILPVISALVTMYGRCGKLEVGQRVFDRMHDRDVVSWNSLISSYGVHGYGKKAIQIFEEMLANGASPTPVTFVSVLGACSHEGLVEEGKRLFETMWRDHGIKPQIEHYACMVDLLGRANRLDEAAKMVQDMRTEPGPKVWGSLLGSCRIHGNVELAERASRRLFALEPKNAGNYVLLADIYAEAQMWDEVKRVKKLLEHRGLQKLPGRCWMEVRRKMYSFVSVDEFNPLMEQIHAFLVKLAEDMKEKGYIPQTKGVLYELETEEKERIVLGHSEKLALAFGLINTSKGEPIRITKNLRLCEDCHLFTKFISKFMEKEILVRDVNRFHRFKNGVCSCGDYW.

A chloroplast-targeting transit peptide spans 1-51; sequence MFLSHPPQVIQPTYHTVNFLPRSPLKPPSCSVALNNPSISSGAGAKISNNQ. PPR repeat units follow at residues 45–75, 76–110, 111–141, 142–176, 177–215, 216–246, 247–277, 284–318, 319–349, 350–384, 385–420, and 421–451; these read AKIS…ESSP, SQQT…GSDQ, DPFL…TRKR, TIYV…GVES, DRFT…GYSS, HVYI…MPVR, NVVS…MMRE, NSVT…GLDS, ILPV…MHDR, DVVS…GASP, TPVT…GIKP, and QIEH…MRTE. The tract at residues 456-531 is type E motif; it reads VWGSLLGSCR…LPGRCWMEVR (76 aa). The segment at 532–562 is type E(+) motif; that stretch reads RKMYSFVSVDEFNPLMEQIHAFLVKLAEDMK. The type DYW motif stretch occupies residues 563–657; the sequence is EKGYIPQTKG…NGVCSCGDYW (95 aa).

Belongs to the PPR family. PCMP-H subfamily.

Its subcellular location is the plastid. The protein localises to the chloroplast. Functionally, required for the intergenic processing between chloroplast rsp7 and ndhB transcripts. Necessary for chloroplast NADH dehydrogenase-like (NDH) complex-dependent cyclic electron transport around PSI (CET). This chain is Pentatricopeptide repeat-containing protein CRR2, chloroplastic, found in Arabidopsis thaliana (Mouse-ear cress).